The chain runs to 105 residues: Cuticle protein AMP2 (105 aa).

The segment at 1-21 (DRDAQTLTDERSDQGDGNFRY) is disordered. Residues 16–81 (DGNFRYEFET…PSSDLLPVGP (66 aa)) enclose the Chitin-binding type R&amp;R domain.

As to expression, arthrodial membrane.

In Homarus americanus (American lobster), this protein is Cuticle protein AMP2.